Consider the following 186-residue polypeptide: Sec-independent protein translocase protein TatB (186 aa).

The chain crosses the membrane as a helical span at residues 1–21; that stretch reads MFDIGFSELILLMVLGLVVLG. The tract at residues 162 to 186 is disordered; the sequence is LSSYYPPDDIEIAPASKSQSSKTKS. Over residues 177 to 186 the composition is skewed to polar residues; sequence SKSQSSKTKS.

This sequence belongs to the TatB family. As to quaternary structure, the Tat system comprises two distinct complexes: a TatABC complex, containing multiple copies of TatA, TatB and TatC subunits, and a separate TatA complex, containing only TatA subunits. Substrates initially bind to the TatABC complex, which probably triggers association of the separate TatA complex to form the active translocon.

It localises to the cell inner membrane. In terms of biological role, part of the twin-arginine translocation (Tat) system that transports large folded proteins containing a characteristic twin-arginine motif in their signal peptide across membranes. Together with TatC, TatB is part of a receptor directly interacting with Tat signal peptides. TatB may form an oligomeric binding site that transiently accommodates folded Tat precursor proteins before their translocation. This is Sec-independent protein translocase protein TatB from Haemophilus influenzae (strain 86-028NP).